The sequence spans 436 residues: ATP-dependent protease ATPase subunit HslU (436 aa).

ATP contacts are provided by residues Ile-19, 61-65 (GVGKT), Asp-249, Glu-314, and Arg-386.

The protein belongs to the ClpX chaperone family. HslU subfamily. A double ring-shaped homohexamer of HslV is capped on each side by a ring-shaped HslU homohexamer. The assembly of the HslU/HslV complex is dependent on binding of ATP.

It localises to the cytoplasm. ATPase subunit of a proteasome-like degradation complex; this subunit has chaperone activity. The binding of ATP and its subsequent hydrolysis by HslU are essential for unfolding of protein substrates subsequently hydrolyzed by HslV. HslU recognizes the N-terminal part of its protein substrates and unfolds these before they are guided to HslV for hydrolysis. The sequence is that of ATP-dependent protease ATPase subunit HslU from Bartonella henselae (strain ATCC 49882 / DSM 28221 / CCUG 30454 / Houston 1) (Rochalimaea henselae).